We begin with the raw amino-acid sequence, 161 residues long: 3-hydroxyacyl-[acyl-carrier-protein] dehydratase FabZ (161 aa).

His55 is a catalytic residue.

This sequence belongs to the thioester dehydratase family. FabZ subfamily.

It localises to the cytoplasm. The catalysed reaction is a (3R)-hydroxyacyl-[ACP] = a (2E)-enoyl-[ACP] + H2O. In terms of biological role, involved in unsaturated fatty acids biosynthesis. Catalyzes the dehydration of short chain beta-hydroxyacyl-ACPs and long chain saturated and unsaturated beta-hydroxyacyl-ACPs. In Jannaschia sp. (strain CCS1), this protein is 3-hydroxyacyl-[acyl-carrier-protein] dehydratase FabZ.